Here is a 47-residue protein sequence, read N- to C-terminus: Large ribosomal subunit protein bL33 (47 aa).

Belongs to the bacterial ribosomal protein bL33 family.

The sequence is that of Large ribosomal subunit protein bL33 from Staphylococcus xylosus.